Reading from the N-terminus, the 236-residue chain is MSIHISAKQGDIADKILLPGDPLRAKFIAENFLEDAVCFNEVRNMFGYTGTYKGERVSVMGTGMGMPSISIYARELIVDYGVKKLIRVGTAGSLNENVHVRELVLAQAAATNSNIIRNDWPQYDFPQIANFNLLDKAYHIAKNFGMTTHVGNVLSSDVFYSNYFEKNIELGKWGVKAVEMEAAALYYLAAQHQVDALAIMTISDSLVNPDEDTTAEERQNTFTDMMKVGLETLIAD.

An a purine D-ribonucleoside-binding site is contributed by histidine 4. Residues glycine 20, arginine 24, arginine 43, and arginine 87–threonine 90 each bind phosphate. Residues glutamate 179–glutamate 181 and serine 203–aspartate 204 contribute to the a purine D-ribonucleoside site. Aspartate 204 (proton donor) is an active-site residue.

The protein belongs to the PNP/UDP phosphorylase family. Homohexamer; trimer of homodimers.

It catalyses the reaction a purine D-ribonucleoside + phosphate = a purine nucleobase + alpha-D-ribose 1-phosphate. The catalysed reaction is a purine 2'-deoxy-D-ribonucleoside + phosphate = a purine nucleobase + 2-deoxy-alpha-D-ribose 1-phosphate. In terms of biological role, catalyzes the reversible phosphorolytic breakdown of the N-glycosidic bond in the beta-(deoxy)ribonucleoside molecules, with the formation of the corresponding free purine bases and pentose-1-phosphate. The sequence is that of Purine nucleoside phosphorylase DeoD-type from Streptococcus thermophilus (strain ATCC BAA-491 / LMD-9).